The sequence spans 207 residues: Uracil phosphoribosyltransferase (207 aa).

Residues arginine 77, arginine 102, and 129-137 (DPMLATGGS) contribute to the 5-phospho-alpha-D-ribose 1-diphosphate site. Residues isoleucine 192 and 197 to 199 (GDA) contribute to the uracil site. Aspartate 198 contacts 5-phospho-alpha-D-ribose 1-diphosphate.

It belongs to the UPRTase family. Requires Mg(2+) as cofactor.

The catalysed reaction is UMP + diphosphate = 5-phospho-alpha-D-ribose 1-diphosphate + uracil. Its pathway is pyrimidine metabolism; UMP biosynthesis via salvage pathway; UMP from uracil: step 1/1. With respect to regulation, allosterically activated by GTP. Its function is as follows. Catalyzes the conversion of uracil and 5-phospho-alpha-D-ribose 1-diphosphate (PRPP) to UMP and diphosphate. This chain is Uracil phosphoribosyltransferase, found in Dictyoglomus turgidum (strain DSM 6724 / Z-1310).